We begin with the raw amino-acid sequence, 406 residues long: Argininosuccinate synthase (406 aa).

ATP contacts are provided by residues 11–19 (AYSGGLDTS) and alanine 38. L-citrulline contacts are provided by tyrosine 91 and serine 96. Glycine 121 contacts ATP. L-aspartate contacts are provided by threonine 123, asparagine 127, and aspartate 128. L-citrulline is bound at residue asparagine 127. The L-citrulline site is built by arginine 131, serine 181, serine 190, glutamate 266, and tyrosine 278.

This sequence belongs to the argininosuccinate synthase family. Type 1 subfamily. In terms of assembly, homotetramer.

It localises to the cytoplasm. The catalysed reaction is L-citrulline + L-aspartate + ATP = 2-(N(omega)-L-arginino)succinate + AMP + diphosphate + H(+). Its pathway is amino-acid biosynthesis; L-arginine biosynthesis; L-arginine from L-ornithine and carbamoyl phosphate: step 2/3. This Campylobacter jejuni subsp. jejuni serotype O:6 (strain 81116 / NCTC 11828) protein is Argininosuccinate synthase.